A 1000-amino-acid chain; its full sequence is Putative methyl-accepting chemotaxis protein sll0041 (1000 aa).

The disordered stretch occupies residues 1–59; that stretch reads MTQNPSSDRRPDTAQSVANGETLDGALFTGLTDTAAAQDESSETSASFATIDGEDKSEV. 2 GAF domains span residues 342–478 and 509–650; these read EIQG…QTTL and NSEQ…GLAL. Residues 671–722 form the HAMP domain; it reads EKMQKRALELLMEVDPVSRGDLTIRAHVTEDEIGTIADSYNATIESLRRIVT. One can recognise a Methyl-accepting transducer domain in the interval 727–963; that stretch reads AASQFTETTD…SVTQTMALVA (237 aa).

It belongs to the methyl-accepting chemotaxis (MCP) protein family.

The sequence is that of Putative methyl-accepting chemotaxis protein sll0041 from Synechocystis sp. (strain ATCC 27184 / PCC 6803 / Kazusa).